The following is a 132-amino-acid chain: Small ribosomal subunit protein uS8 (132 aa).

Belongs to the universal ribosomal protein uS8 family. As to quaternary structure, part of the 30S ribosomal subunit. Contacts proteins S5 and S12.

Its function is as follows. One of the primary rRNA binding proteins, it binds directly to 16S rRNA central domain where it helps coordinate assembly of the platform of the 30S subunit. In Anaplasma marginale (strain Florida), this protein is Small ribosomal subunit protein uS8.